The sequence spans 363 residues: Pyrimidine monooxygenase RutA (363 aa).

Residues Ile49–Lys50, Asn115, Glu124, Arg140–Tyr141, and Ser190 contribute to the FMN site.

It belongs to the NtaA/SnaA/DszA monooxygenase family. RutA subfamily.

The enzyme catalyses uracil + FMNH2 + NADH + O2 = (Z)-3-ureidoacrylate + FMN + NAD(+) + H2O + H(+). It carries out the reaction thymine + FMNH2 + NADH + O2 = (Z)-2-methylureidoacrylate + FMN + NAD(+) + H2O + H(+). In terms of biological role, catalyzes the pyrimidine ring opening between N-3 and C-4 by an unusual flavin hydroperoxide-catalyzed mechanism, adding oxygen atoms in the process to yield ureidoacrylate peracid, that immediately reacts with FMN forming ureidoacrylate and FMN-N(5)-oxide. The FMN-N(5)-oxide reacts spontaneously with NADH to produce FMN. Requires the flavin reductase RutF to regenerate FMN in vivo. The polypeptide is Pyrimidine monooxygenase RutA (Pantoea ananatis (strain LMG 20103)).